An 87-amino-acid polypeptide reads, in one-letter code: Polyketide-8 synthase acyl carrier protein 2 (87 aa).

The region spanning 8–83 (ALDKEQLREL…GTYELLTSKL (76 aa)) is the Carrier domain. Serine 43 is modified (O-(pantetheine 4'-phosphoryl)serine).

In terms of processing, 4'-phosphopantetheine is transferred from CoA to a specific serine of the apo-ACP-like protein.

Its function is as follows. Acyl carrier protein. This chain is Polyketide-8 synthase acyl carrier protein 2, found in Streptomyces avermitilis (strain ATCC 31267 / DSM 46492 / JCM 5070 / NBRC 14893 / NCIMB 12804 / NRRL 8165 / MA-4680).